A 257-amino-acid chain; its full sequence is ECF RNA polymerase sigma factor SigE (257 aa).

Residues 87-153 are sigma-70 factor domain-2; it reads LVRQHADRVY…FLDMVRRRAR (67 aa). The Polymerase core binding signature appears at 111-114; the sequence is DLTQ. A sigma-70 factor domain-4 region spans residues 186-236; it reads LQAALASLPPEFRAAVVLCDIEGLSYEEIGATLGVKLGTVRSRIHRGRQAL. Positions 211-230 form a DNA-binding region, H-T-H motif; it reads YEEIGATLGVKLGTVRSRIH.

This sequence belongs to the sigma-70 factor family. ECF subfamily. In terms of assembly, interacts transiently with the RNA polymerase catalytic core formed by RpoA, RpoB, RpoC and RpoZ (2 alpha, 1 beta, 1 beta' and 1 omega subunit) to form the RNA polymerase holoenzyme that can initiate transcription. Interacts (via sigma-70 factor domain 4) with cognate anti-sigma-E factor RseA under reducing conditions, which stops the sigma factor from functioning.

Its function is as follows. Sigma factors are initiation factors that promote the attachment of RNA polymerase to specific initiation sites and are then released. Extracytoplasmic function (ECF) sigma factors are held in an inactive form by an anti-sigma factor until released. Responds to surface stress (H(2)O(2)). The chain is ECF RNA polymerase sigma factor SigE (sigE) from Mycobacterium tuberculosis (strain ATCC 35801 / TMC 107 / Erdman).